The chain runs to 195 residues: Putative Tricorn-like protease N-terminal subunit (195 aa).

It belongs to the peptidase S41B family.

The protein localises to the cytoplasm. Degrades oligopeptides in a sequential manner. The sequence is that of Putative Tricorn-like protease N-terminal subunit (triN) from Sulfurisphaera tokodaii (strain DSM 16993 / JCM 10545 / NBRC 100140 / 7) (Sulfolobus tokodaii).